The sequence spans 1020 residues: Mediator of RNA polymerase II transcription subunit 16 (1020 aa).

Belongs to the Mediator complex subunit 16 family. Component of the Mediator complex.

The protein localises to the nucleus. In terms of biological role, component of the Mediator complex, a coactivator involved in the regulated transcription of nearly all RNA polymerase II-dependent genes. Mediator functions as a bridge to convey information from gene-specific regulatory proteins to the basal RNA polymerase II transcription machinery. Mediator is recruited to promoters by direct interactions with regulatory proteins and serves as a scaffold for the assembly of a functional preinitiation complex with RNA polymerase II and the general transcription factors. The polypeptide is Mediator of RNA polymerase II transcription subunit 16 (SIN4) (Scheffersomyces stipitis (strain ATCC 58785 / CBS 6054 / NBRC 10063 / NRRL Y-11545) (Yeast)).